A 223-amino-acid polypeptide reads, in one-letter code: Ribonuclease T (223 aa).

The Exonuclease domain maps to Val-20–Phe-194. Asp-23, Glu-25, His-181, and Asp-186 together coordinate Mg(2+). The active-site Proton donor/acceptor is His-181.

Belongs to the RNase T family. In terms of assembly, homodimer. Mg(2+) serves as cofactor.

In terms of biological role, trims short 3' overhangs of a variety of RNA species, leaving a one or two nucleotide 3' overhang. Responsible for the end-turnover of tRNA: specifically removes the terminal AMP residue from uncharged tRNA (tRNA-C-C-A). Also appears to be involved in tRNA biosynthesis. In Shewanella sp. (strain W3-18-1), this protein is Ribonuclease T.